The sequence spans 730 residues: Polyphosphate kinase (730 aa).

A compositionally biased stretch (basic and acidic residues) spans 1–21 (MMRHDRNVTEIDAETRPDENL). Residues 1–39 (MMRHDRNVTEIDAETRPDENLWHSGDSAVGAPPAATPAA) form a disordered region. N86 lines the ATP pocket. Positions 423 and 453 each coordinate Mg(2+). The active-site Phosphohistidine intermediate is the H483. ATP contacts are provided by Y516, R612, and H640.

It belongs to the polyphosphate kinase 1 (PPK1) family. It depends on Mg(2+) as a cofactor. Post-translationally, an intermediate of this reaction is the autophosphorylated ppk in which a phosphate is covalently linked to a histidine residue through a N-P bond.

It catalyses the reaction [phosphate](n) + ATP = [phosphate](n+1) + ADP. Functionally, catalyzes the reversible transfer of the terminal phosphate of ATP to form a long-chain polyphosphate (polyP). This Mycobacterium avium (strain 104) protein is Polyphosphate kinase.